A 161-amino-acid chain; its full sequence is Nucleotide-binding protein Dtpsy_2240 (161 aa).

The protein belongs to the YajQ family.

Functionally, nucleotide-binding protein. This chain is Nucleotide-binding protein Dtpsy_2240, found in Acidovorax ebreus (strain TPSY) (Diaphorobacter sp. (strain TPSY)).